The chain runs to 1095 residues: Putative disease resistance protein At4g11170 (1095 aa).

Residues 9–173 enclose the TIR domain; sequence WRYDVFPSFR…TISKDVLEKL (165 aa). Glu84 is a catalytic residue. The NB-ARC domain maps to 168-454; it reads DVLEKLNATP…HENYLKQMII (287 aa). LRR repeat units follow at residues 609-631, 632-654, 655-677, 679-701, 702-722, and 723-744; these read CLVELNMSHSKLKKLWSGVQPLR, NLRTMNLNSSRNLEILPNLMEAT, KLNRLDLGWCESLVELPSSIKNL, HLILLEMSCCKKLEIIPTNINLP, SLEVLHFRYCTRLQTFPEIST, and NIRLLNLIGTAITEVPPSVKYW.

The enzyme catalyses NAD(+) + H2O = ADP-D-ribose + nicotinamide + H(+). The sequence is that of Putative disease resistance protein At4g11170 from Arabidopsis thaliana (Mouse-ear cress).